Consider the following 405-residue polypeptide: Prostaglandin E2 receptor EP1 subtype (405 aa).

Residues 1–39 are Extracellular-facing; the sequence is MSPYGLNLSLVDEATTCVTPRVPNTSVVLPTGGNGTSPA. N-linked (GlcNAc...) asparagine glycans are attached at residues Asn7, Asn24, and Asn34. A helical membrane pass occupies residues 40–62; it reads LPIFSMTLGAVSNVLALALLAQV. The Cytoplasmic segment spans residues 63–80; the sequence is AGRLRRRRSTATFLLFVA. A helical membrane pass occupies residues 81 to 99; it reads SLLAIDLAGHVIPGALVLR. The Extracellular portion of the chain corresponds to 100–113; sequence LYTAGRAPAGGACH. Cys112 and Cys190 are oxidised to a cystine. Residues 114 to 135 form a helical membrane-spanning segment; it reads FLGGCMVFFGLCPLLLGCGMAV. Topologically, residues 136–157 are cytoplasmic; that stretch reads ERCVGVTQPLIHAARVSVARAR. Residues 158 to 179 form a helical membrane-spanning segment; the sequence is LALALLAAMALAVALLPLVHVG. Residues 180–202 are Extracellular-facing; sequence HYELQYPGTWCFISLGPPGGWRQ. Residues 203 to 228 traverse the membrane as a helical segment; sequence ALLAGLFAGLGLAALLAALVCNTLSG. The Cytoplasmic portion of the chain corresponds to 229–301; that stretch reads LALLRARWRR…HAHDVEMVGQ (73 aa). The chain crosses the membrane as a helical span at residues 302–323; sequence LVGIMVVSCICWSPLLVLVVLA. The Extracellular segment spans residues 324–337; sequence IGGWNSNSLQRPLF. Residues 338-357 traverse the membrane as a helical segment; it reads LAVRLASWNQILDPWVYILL. Over 358–405 the chain is Cytoplasmic; sequence RQAMLRQLLRLLPLRVSAKGGPTELSLTKSAWEASSLRSSRHSGFSHL.

It belongs to the G-protein coupled receptor 1 family. In terms of processing, phosphorylated. In terms of tissue distribution, highly abundant in kidney and lung. Found in a lesser extent in spleen, colon, and thymus. Also expressed in uterine myometrium and endometrium.

The protein resides in the cell membrane. Its function is as follows. Receptor for prostaglandin E2 (PGE2). The activity of this receptor is mediated by G(q) proteins which activate a phosphatidylinositol-calcium second messenger system. May play a role as an important modulator of renal function. Implicated the smooth muscle contractile response to PGE2 in various tissues. Isoform 1 and isoform 2 have identical ligand binding properties, but isoform 2 lacks coupling to calcium mobilization and may therefore attenuate the action of PGE2 on tissues. The chain is Prostaglandin E2 receptor EP1 subtype (Ptger1) from Rattus norvegicus (Rat).